The sequence spans 88 residues: MARVTVEDCLPLVDNRFALVLLATKRTRQLMAGARPLQGHAKNKAPVVALREIATGKVRFDRSVRDALSGKFDKEKSTIPAGQTRTLR.

Belongs to the RNA polymerase subunit omega family. The RNAP catalytic core consists of 2 alpha, 1 beta, 1 beta' and 1 omega subunit. When a sigma factor is associated with the core the holoenzyme is formed, which can initiate transcription.

It catalyses the reaction RNA(n) + a ribonucleoside 5'-triphosphate = RNA(n+1) + diphosphate. In terms of biological role, promotes RNA polymerase assembly. Latches the N- and C-terminal regions of the beta' subunit thereby facilitating its interaction with the beta and alpha subunits. In Anaeromyxobacter sp. (strain Fw109-5), this protein is DNA-directed RNA polymerase subunit omega.